We begin with the raw amino-acid sequence, 160 residues long: Fimbrial protein (160 aa).

Positions 1-7 are cleaved as a propeptide — leader sequence; that stretch reads MKSLQKG. Phe-8 carries the N-methylphenylalanine modification. A helical transmembrane segment spans residues 8–28; the sequence is FTLIELMIVVAIIGILAAFAI.

It belongs to the N-Me-Phe pilin family. In terms of assembly, the pili are polar flexible filaments of about 5.4 nanometers diameter and 2.5 micrometers average length; they consist of only a single polypeptide chain arranged in a helical configuration of five subunits per turn in the assembled pilus.

It localises to the fimbrium. Its subcellular location is the membrane. The polypeptide is Fimbrial protein (fimA) (Dichelobacter nodosus (Bacteroides nodosus)).